We begin with the raw amino-acid sequence, 136 residues long: Large ribosomal subunit protein uL16c (136 aa).

It belongs to the universal ribosomal protein uL16 family. Part of the 50S ribosomal subunit.

The protein localises to the plastid. It is found in the chloroplast. This chain is Large ribosomal subunit protein uL16c, found in Saccharum hybrid (Sugarcane).